The following is a 35-amino-acid chain: Thionin NsW2 (35 aa).

3 disulfide bridges follow: cysteine 4–cysteine 32, cysteine 12–cysteine 30, and cysteine 16–cysteine 26.

Post-translationally, contains 4 disulfide bonds.

It is found in the secreted. In terms of biological role, antimicrobial peptide disrupting membranes. Has antibacterial against Gram-positive bacteria S.aureus (MIC=6.5 uM) and B.subtilis (MIC=3.25 uM) but not against Gram-negative bacterium E.coli. Has antifungal activity against C.albicans (MIC=3.25 uM). This Nigella sativa (Black cumin) protein is Thionin NsW2.